A 304-amino-acid polypeptide reads, in one-letter code: Thiosulfate sulfurtransferase TUM1 (304 aa).

Rhodanese domains lie at 20–137 (KVHR…PLDS) and 177–299 (LAKK…PEWI). Over residues 191 to 201 (RFEGTEPEPRS) the composition is skewed to basic and acidic residues. The segment at 191-222 (RFEGTEPEPRSDIPSGHIPGTQPLPYGSLLDP) is disordered. S201 is subject to Phosphoserine. C259 acts as the Cysteine persulfide intermediate in catalysis. S264 bears the Phosphoserine mark.

It is found in the mitochondrion. It localises to the cytoplasm. It carries out the reaction thiosulfate + hydrogen cyanide = thiocyanate + sulfite + 2 H(+). Sulfur transferase that accepts persulfite from NFS1 and transfers it to UBA4 in the pathway for 2-thiolation of the wobble uridine base of tRNAs. Stimulates sulfur transfer by NFS1. Involved in metabolism of sterol esters in a tRNA thiolation pathway-independent manner. This chain is Thiosulfate sulfurtransferase TUM1, found in Saccharomyces cerevisiae (strain ATCC 204508 / S288c) (Baker's yeast).